A 60-amino-acid polypeptide reads, in one-letter code: Mastoparan-B (60 aa).

An N-terminal signal peptide occupies residues 1–27; the sequence is MKNTILILFTAFIALLGFFGMSAEALA. AXPX repeat units lie at residues 27 to 30, 31 to 34, 35 to 38, and 41 to 44; these read ADPL, AEPL, ADPN, and ADPE. A propeptide spanning residues 28 to 45 is cleaved from the precursor; sequence DPLAEPLADPNAEADPEA. At Leu-59 the chain carries Leucine amide.

Belongs to the MCD family. Mastoparan subfamily. In terms of tissue distribution, expressed by the venom gland.

The protein resides in the secreted. Its subcellular location is the target cell membrane. Its function is as follows. Antimicrobial and mast cell degranulating peptide. Has broad spectrum antibacterial activity against both Gram-positive (S.aureus MIC=96-128 ug/ml, S.xylosus MIC=2 ug/ml, S.alactolyticus MIC=32 ug/ml, and S.choleraesuis MIC=32 ug/ml) and Gram-negative bacteria (C.koseri MIC=6 ug/ml, E.coli MIC=3-16 ug/ml, K.pneumoniae MIC=128 ug/ml, P.aerugiosa MIC=128 ug/ml, S.typhimurium MIC=64 ug/ml, V.parahamelytics MIC=32 ug/ml, and S.enterica), as well as on fungi (C.albicans, C.glabrata, and C.neoformans). Does not show antimicrobial activity against S.mutans. Affects membrane permeability of E.coli. Also acts as a mast cell degranulating peptide, that causes liberation of histamine from rat peritoneal mast cells. Its mast cell degranulation activity may be related to the activation of G-protein coupled receptors in mast cells as well as interaction with other proteins located in cell endosomal membranes in the mast cells. Whether this peptide shows hemolytic activities is controversial, as Lin et al., 2011 and Ho et al., 1991 found a hemolytic activity on sheep, chicken and human erythrocytes, whereas Kim et al., 2016 found no hemolytic activity on human erythrocytes. In vivo, induces edema in the rat paw. The sequence is that of Mastoparan-B from Vespa basalis (Hornet).